The chain runs to 235 residues: uncharacterized protein (235 aa).

Positions M1–A24 are cleaved as a signal peptide.

This is an uncharacterized protein from Haemophilus influenzae (strain ATCC 51907 / DSM 11121 / KW20 / Rd).